The sequence spans 199 residues: FMN-dependent NADH:quinone oxidoreductase 2 (199 aa).

Residues serine 10, 16-18 (SVS), and 96-99 (MYNF) each bind FMN.

Belongs to the azoreductase type 1 family. Homodimer. The cofactor is FMN.

The catalysed reaction is 2 a quinone + NADH + H(+) = 2 a 1,4-benzosemiquinone + NAD(+). It catalyses the reaction N,N-dimethyl-1,4-phenylenediamine + anthranilate + 2 NAD(+) = 2-(4-dimethylaminophenyl)diazenylbenzoate + 2 NADH + 2 H(+). In terms of biological role, quinone reductase that provides resistance to thiol-specific stress caused by electrophilic quinones. Its function is as follows. Also exhibits azoreductase activity. Catalyzes the reductive cleavage of the azo bond in aromatic azo compounds to the corresponding amines. The chain is FMN-dependent NADH:quinone oxidoreductase 2 from Pseudomonas fluorescens (strain Pf0-1).